Reading from the N-terminus, the 187-residue chain is MMKYVFVALCLFAVVALATEVEQKESNTRVARLNVGGLVGCVVALVANIVGGLLRVIIGLVVTLSGVLQIVVGTVLGLVATVASLALDVVGSTVGGILNSLLGLGAILSLVEEVLHVLLSQALLTGLVNAIFALPLSLLVALSTLTDALASAACDCGASATGAGSSLAGCIAGPNGLLFTVGAGASV.

A signal peptide spans 1–18 (MMKYVFVALCLFAVVALA).

It to HAP-S protein.

The protein resides in the membrane. The protein is Plasmodium-specific hydrophobic abundant protein of Physarum polycephalum (Slime mold).